We begin with the raw amino-acid sequence, 335 residues long: Phosphate acyltransferase (335 aa).

This sequence belongs to the PlsX family. As to quaternary structure, homodimer. Probably interacts with PlsY.

It is found in the cytoplasm. It catalyses the reaction a fatty acyl-[ACP] + phosphate = an acyl phosphate + holo-[ACP]. Its pathway is lipid metabolism; phospholipid metabolism. Its function is as follows. Catalyzes the reversible formation of acyl-phosphate (acyl-PO(4)) from acyl-[acyl-carrier-protein] (acyl-ACP). This enzyme utilizes acyl-ACP as fatty acyl donor, but not acyl-CoA. This Desulforudis audaxviator (strain MP104C) protein is Phosphate acyltransferase.